Consider the following 271-residue polypeptide: 4-hydroxy-tetrahydrodipicolinate reductase (271 aa).

NAD(+)-binding positions include 11–16 (GGSGRM) and E37. NADP(+) is bound at residue R38. Residues 101–103 (GTT) and 125–128 (APNM) contribute to the NAD(+) site. H158 acts as the Proton donor/acceptor in catalysis. H159 contacts (S)-2,3,4,5-tetrahydrodipicolinate. Catalysis depends on K162, which acts as the Proton donor. A (S)-2,3,4,5-tetrahydrodipicolinate-binding site is contributed by 168-169 (GT).

It belongs to the DapB family.

Its subcellular location is the cytoplasm. It carries out the reaction (S)-2,3,4,5-tetrahydrodipicolinate + NAD(+) + H2O = (2S,4S)-4-hydroxy-2,3,4,5-tetrahydrodipicolinate + NADH + H(+). It catalyses the reaction (S)-2,3,4,5-tetrahydrodipicolinate + NADP(+) + H2O = (2S,4S)-4-hydroxy-2,3,4,5-tetrahydrodipicolinate + NADPH + H(+). The protein operates within amino-acid biosynthesis; L-lysine biosynthesis via DAP pathway; (S)-tetrahydrodipicolinate from L-aspartate: step 4/4. In terms of biological role, catalyzes the conversion of 4-hydroxy-tetrahydrodipicolinate (HTPA) to tetrahydrodipicolinate. The polypeptide is 4-hydroxy-tetrahydrodipicolinate reductase (Shewanella piezotolerans (strain WP3 / JCM 13877)).